Consider the following 445-residue polypeptide: UPF0210 protein SPG_0223 (445 aa).

This sequence belongs to the UPF0210 family. Homodimer.

The chain is UPF0210 protein SPG_0223 from Streptococcus pneumoniae serotype 19F (strain G54).